A 175-amino-acid polypeptide reads, in one-letter code: ADP-ribosylation factor 6 (175 aa).

Glycine 2 carries N-myristoyl glycine lipidation. Residues 20–27 (GLDAAGKT), 63–67 (DVGGQ), and 122–125 (NKQD) each bind GTP.

The protein belongs to the small GTPase superfamily. Arf family. As to expression, expressed in the head (at protein level).

Its subcellular location is the golgi apparatus. Activation is generally mediated by a guanine exchange factor (GEF), while inactivation through hydrolysis of bound GTP is catalyzed by a GTPase activating protein (GAP). May be activated by Efa6. GTP-binding protein involved in protein trafficking; may modulate vesicle budding and uncoating within the Golgi apparatus. Promotes cell movement and remodeling of the actin cytoskeleton during compound eye morphogenesis. Required for normal ethanol-induced tolerance and preference. Probably after Efa6-mediated activation, counteracts ethanol-induced sedation. The polypeptide is ADP-ribosylation factor 6 (Drosophila melanogaster (Fruit fly)).